Reading from the N-terminus, the 183-residue chain is Inner membrane-spanning protein YciB (183 aa).

Transmembrane regions (helical) follow at residues 22 to 44, 53 to 73, 76 to 96, 121 to 141, and 153 to 173; these read VQAAAITLVLATILQLILVRILF, IVGLSVIIFGILTAYFDDLAF, WKVTIINGLFAAVLLISQYVF, LGWAIFFIICMLINIIISQLF, and GFTGLSLVAVIITGIYLYPYI.

Belongs to the YciB family.

Its subcellular location is the cell inner membrane. Functionally, plays a role in cell envelope biogenesis, maintenance of cell envelope integrity and membrane homeostasis. This is Inner membrane-spanning protein YciB from Haemophilus ducreyi (strain 35000HP / ATCC 700724).